A 695-amino-acid chain; its full sequence is Tripartite terminase subunit 1 (695 aa).

The C3H1-type zinc-finger motif lies at 182–210 (CLECLQEVCLTPNQGTSLQAMLPDTACSH). 621–628 (YNRTWERE) serves as a coordination point for ATP.

The protein belongs to the herpesviridae TRM1 protein family. As to quaternary structure, associates with TRM2 and TRM3 to form the tripartite terminase complex. Interacts with portal protein.

The protein resides in the host nucleus. Component of the molecular motor that translocates viral genomic DNA in empty capsid during DNA packaging. Forms a tripartite terminase complex together with TRM2 and TRM3 in the host cytoplasm. Once the complex reaches the host nucleus, it interacts with the capsid portal vertex. This portal forms a ring in which genomic DNA is translocated into the capsid. TRM1 carries an endonuclease activity that plays an important role for the cleavage of concatemeric viral DNA into unit length genomes. This Homo sapiens (Human) protein is Tripartite terminase subunit 1.